The chain runs to 275 residues: 4-diphosphocytidyl-2-C-methyl-D-erythritol kinase (275 aa).

Residue Lys-9 is part of the active site. 90 to 100 (PVGGGLGGGSS) lines the ATP pocket. Asp-132 is an active-site residue.

Belongs to the GHMP kinase family. IspE subfamily.

It carries out the reaction 4-CDP-2-C-methyl-D-erythritol + ATP = 4-CDP-2-C-methyl-D-erythritol 2-phosphate + ADP + H(+). It functions in the pathway isoprenoid biosynthesis; isopentenyl diphosphate biosynthesis via DXP pathway; isopentenyl diphosphate from 1-deoxy-D-xylulose 5-phosphate: step 3/6. In terms of biological role, catalyzes the phosphorylation of the position 2 hydroxy group of 4-diphosphocytidyl-2C-methyl-D-erythritol. The sequence is that of 4-diphosphocytidyl-2-C-methyl-D-erythritol kinase from Sulfurihydrogenibium sp. (strain YO3AOP1).